The primary structure comprises 179 residues: ATP synthase subunit delta (179 aa).

This sequence belongs to the ATPase delta chain family. In terms of assembly, F-type ATPases have 2 components, F(1) - the catalytic core - and F(0) - the membrane proton channel. F(1) has five subunits: alpha(3), beta(3), gamma(1), delta(1), epsilon(1). F(0) has three main subunits: a(1), b(2) and c(10-14). The alpha and beta chains form an alternating ring which encloses part of the gamma chain. F(1) is attached to F(0) by a central stalk formed by the gamma and epsilon chains, while a peripheral stalk is formed by the delta and b chains.

Its subcellular location is the cell membrane. In terms of biological role, f(1)F(0) ATP synthase produces ATP from ADP in the presence of a proton or sodium gradient. F-type ATPases consist of two structural domains, F(1) containing the extramembraneous catalytic core and F(0) containing the membrane proton channel, linked together by a central stalk and a peripheral stalk. During catalysis, ATP synthesis in the catalytic domain of F(1) is coupled via a rotary mechanism of the central stalk subunits to proton translocation. Functionally, this protein is part of the stalk that links CF(0) to CF(1). It either transmits conformational changes from CF(0) to CF(1) or is implicated in proton conduction. The polypeptide is ATP synthase subunit delta (Listeria welshimeri serovar 6b (strain ATCC 35897 / DSM 20650 / CCUG 15529 / CIP 8149 / NCTC 11857 / SLCC 5334 / V8)).